A 58-amino-acid chain; its full sequence is Microcin J25 (58 aa).

The propeptide occupies 1–37 (MIKHFHFNKLSSGKKNNVPSPAKGVIQIKKSASQLTK). A cross-link (isoglutamyl glycine isopeptide (Gly-Glu)) is located at residues 38–45 (GGAGHVPE).

It is found in the secreted. Its function is as follows. Peptide antibiotic that functions through inhibition of the bacterial DNA-dependent RNA polymerase (RNAP). Inhibits transcription by binding deep within RNAP secondary channel, where it sterically blocks the folding of the trigger loop, which is essential for efficient catalysis. In addition, it also seems to restrict access of nucleotide substrates to the catalytic center, and shows a partially competitive mode of inhibition with them. Exhibits potent bacteriocidal activity against a range of Enterobacteriaceae, including several pathogenic E.coli, Salmonella and Shigella strains. Also acts on the cytoplasmic membrane of Salmonella newport, producing alteration of membrane permeability and disruption of the subsequent gradient dissipation, which inhibits several processes essential for cell viability, such as oxygen consumption. Induces bacterial filamentation in susceptible cells in a non-SOS-dependent way, but this phenotype may result from impaired transcription of genes coding for cell division proteins. The chain is Microcin J25 (mcjA) from Escherichia coli.